The sequence spans 297 residues: uncharacterized protein (297 aa).

Disordered stretches follow at residues 12 to 43, 65 to 85, 122 to 151, and 265 to 297; these read QNNN…TNDN, VPNS…DKPI, KVST…TNET, and SRLS…DQNN. Positions 65–79 are enriched in polar residues; sequence VPNSINVNTSSSGNK. Low complexity predominate over residues 122–135; the sequence is KVSTTTTTTSSTSK. Residues 140-151 are compositionally biased toward polar residues; it reads QTITKPNKTNET. The segment covering 268–287 has biased composition (low complexity); it reads SSNNNNNNNNNNNNNNNNSN.

This is an uncharacterized protein from Dictyostelium discoideum (Social amoeba).